A 72-amino-acid chain; its full sequence is MAKEDNIEMQGTILETLPNTMFRVELENGHVVIAHISGKMRKNYIRILTGDKVTVQLTPYDLTKGRIVFRAR.

The 72-residue stretch at 1-72 folds into the S1-like domain; sequence MAKEDNIEMQ…TKGRIVFRAR (72 aa).

It belongs to the IF-1 family. In terms of assembly, component of the 30S ribosomal translation pre-initiation complex which assembles on the 30S ribosome in the order IF-2 and IF-3, IF-1 and N-formylmethionyl-tRNA(fMet); mRNA recruitment can occur at any time during PIC assembly.

It localises to the cytoplasm. In terms of biological role, one of the essential components for the initiation of protein synthesis. Stabilizes the binding of IF-2 and IF-3 on the 30S subunit to which N-formylmethionyl-tRNA(fMet) subsequently binds. Helps modulate mRNA selection, yielding the 30S pre-initiation complex (PIC). Upon addition of the 50S ribosomal subunit IF-1, IF-2 and IF-3 are released leaving the mature 70S translation initiation complex. The polypeptide is Translation initiation factor IF-1 (Shewanella baltica (strain OS155 / ATCC BAA-1091)).